Reading from the N-terminus, the 405-residue chain is Putative colanic acid polymerase (405 aa).

The next 11 helical transmembrane spans lie at 5–25, 27–47, 55–75, 81–101, 117–137, 171–191, 204–224, 244–264, 282–302, 327–347, and 376–396; these read IRIC…VKIA, LGES…LLFL, LMIA…FGQS, YVTS…VWSI, FFYL…AQII, TALY…WLSI, MILA…FILF, PLAL…FPYI, IVGP…VVRF, GLYL…LWYM, and LFFT…CPFI.

It localises to the cell inner membrane. Its pathway is slime biogenesis; slime polysaccharide biosynthesis. This chain is Putative colanic acid polymerase (wcaD), found in Escherichia coli (strain K12).